Reading from the N-terminus, the 156-residue chain is MNSAALNARTASVAPQPQACHACKCRQLLSRRVPPAQRQVECSAIAPETLQDIIVGGAVVGAVSVALYAGLKKDPVPCSLCQGTGGIRCFACGGDGRNATVSRDDLYDSKALGGGVAPPKRDPLGRTINPRDCKVCRGAGLVLCSQCKGTGFQSAF.

A chloroplast-targeting transit peptide spans 1–41; sequence MNSAALNARTASVAPQPQACHACKCRQLLSRRVPPAQRQVE. Cys-78, Cys-81, Cys-89, Cys-92, Cys-133, Cys-136, Cys-144, and Cys-147 together coordinate Zn(2+).

Belongs to the BSD2 chaperone family. As to quaternary structure, interacts with the RuBisCo large subunit (RbcL) assembled as an intermediate complex made of eight RbcL and eight BSD2 subunits.

The protein localises to the plastid. It is found in the chloroplast stroma. Chloroplast chaperone required for RuBisCo biogenesis and translational regulation of the RuBisCo large subunit (RbcL). Stabilizes an end-state assembly intermediate of eight RbcL subunits until the small subunits (RBCSs) become available to produce a complete stable RuBisCo complex containing eight small and eight large subunits. The sequence is that of Protein BUNDLE SHEATH DEFECTIVE 2, chloroplastic from Chlamydomonas reinhardtii (Chlamydomonas smithii).